An 84-amino-acid polypeptide reads, in one-letter code: Hydramacin-1 (84 aa).

The first 24 residues, 1–24 (MRTVVFFILVSIFLVALKPTGTQA), serve as a signal peptide directing secretion. Gln-25 is modified (pyrrolidone carboxylic acid). 4 disulfide bridges follow: Cys-29-Cys-72, Cys-36-Cys-65, Cys-51-Cys-81, and Cys-55-Cys-83.

As to expression, expressed in the endodermal epithelium.

The protein localises to the secreted. The protein resides in the target cell membrane. Cationic antimicrobial peptide potently active against Gram-positive and Gram-negative bacteria including multi-resistant human pathogenic strains. Is not active against the Gram-positive Coccus species, Gram-negative non-fermentation species and against the fungus C.albicans. It leads to aggregation of bacteria as an initial step of its bactericidal mechanism. Aggregated cells are connected via electron-dense contacts and adopt a thorn apple-like morphology. Hydramycin contains a belt of positively charged residues that separate two hydrophobic areas. This structure may explain the observed aggregation of bacteria, since each of these areas can immerse into the outer leaflets of the membranes of two individual bacteria. Is able to permeabilize membranes of viable bacteria at low and neutral pH values, but no pore-forming activity is not detected. This chain is Hydramacin-1, found in Hydra vulgaris (Hydra).